The following is a 756-amino-acid chain: 5-methyltetrahydropteroyltriglutamate--homocysteine methyltransferase (756 aa).

Residues 16 to 19 (RELK) and lysine 116 contribute to the 5-methyltetrahydropteroyltri-L-glutamate site. L-homocysteine is bound by residues 433–435 (IGS) and glutamate 486. L-methionine is bound by residues 433–435 (IGS) and glutamate 486. Residues 517–518 (RC) and tryptophan 563 contribute to the 5-methyltetrahydropteroyltri-L-glutamate site. Aspartate 601 is a binding site for L-homocysteine. An L-methionine-binding site is contributed by aspartate 601. A 5-methyltetrahydropteroyltri-L-glutamate-binding site is contributed by glutamate 607. 3 residues coordinate Zn(2+): histidine 643, cysteine 645, and glutamate 667. The active-site Proton donor is the histidine 696. Position 728 (cysteine 728) interacts with Zn(2+).

This sequence belongs to the vitamin-B12 independent methionine synthase family. Zn(2+) serves as cofactor.

The catalysed reaction is 5-methyltetrahydropteroyltri-L-glutamate + L-homocysteine = tetrahydropteroyltri-L-glutamate + L-methionine. Its pathway is amino-acid biosynthesis; L-methionine biosynthesis via de novo pathway; L-methionine from L-homocysteine (MetE route): step 1/1. Functionally, catalyzes the transfer of a methyl group from 5-methyltetrahydrofolate to homocysteine resulting in methionine formation. The protein is 5-methyltetrahydropteroyltriglutamate--homocysteine methyltransferase of Buchnera aphidicola subsp. Baizongia pistaciae (strain Bp).